The chain runs to 227 residues: Prolactin (227 aa).

The first 28 residues, Met1–Pro28, serve as a signal peptide directing secretion. Cys32 and Cys39 are joined by a disulfide. Ser54 bears the Phosphoserine mark. The N-linked (GlcNAc...) asparagine; partial glycan is linked to Asn59. 4 positions are modified to phosphoserine: Ser62, Ser118, Ser163, and Ser194. 2 cysteine pairs are disulfide-bonded: Cys86–Cys202 and Cys219–Cys227.

Belongs to the somatotropin/prolactin family. Interacts with PRLR.

The protein localises to the secreted. In terms of biological role, prolactin acts primarily on the mammary gland by promoting lactation. In Homo sapiens (Human), this protein is Prolactin (PRL).